The following is a 495-amino-acid chain: Adenosylhomocysteinase (495 aa).

Residues T71, D156, and E218 each coordinate substrate. Position 219 to 221 (219 to 221 (TTT)) interacts with NAD(+). 2 residues coordinate substrate: K248 and D252. NAD(+) is bound by residues N253, 282-287 (GYGDVG), E305, N340, 361-363 (IGH), and N409.

This sequence belongs to the adenosylhomocysteinase family. NAD(+) is required as a cofactor.

It is found in the cytoplasm. The catalysed reaction is S-adenosyl-L-homocysteine + H2O = L-homocysteine + adenosine. It functions in the pathway amino-acid biosynthesis; L-homocysteine biosynthesis; L-homocysteine from S-adenosyl-L-homocysteine: step 1/1. Its function is as follows. May play a key role in the regulation of the intracellular concentration of adenosylhomocysteine. This Mycobacterium tuberculosis (strain ATCC 25177 / H37Ra) protein is Adenosylhomocysteinase.